The chain runs to 154 residues: Deoxyuridine 5'-triphosphate nucleotidohydrolase (154 aa).

Residues 72-74 (RSG), asparagine 85, 89-91 (LID), and methionine 99 contribute to the substrate site.

This sequence belongs to the dUTPase family. Mg(2+) serves as cofactor.

It carries out the reaction dUTP + H2O = dUMP + diphosphate + H(+). It functions in the pathway pyrimidine metabolism; dUMP biosynthesis; dUMP from dCTP (dUTP route): step 2/2. Its function is as follows. This enzyme is involved in nucleotide metabolism: it produces dUMP, the immediate precursor of thymidine nucleotides and it decreases the intracellular concentration of dUTP so that uracil cannot be incorporated into DNA. In Psychrobacter sp. (strain PRwf-1), this protein is Deoxyuridine 5'-triphosphate nucleotidohydrolase.